The chain runs to 362 residues: Probable dual-specificity RNA methyltransferase RlmN (362 aa).

Catalysis depends on Glu-105, which acts as the Proton acceptor. Residues 111–344 (HEYGNSICVT…VTIRREQGHD (234 aa)) form the Radical SAM core domain. Cys-118 and Cys-349 form a disulfide bridge. Residues Cys-125, Cys-129, and Cys-132 each coordinate [4Fe-4S] cluster. Residues 175–176 (GE), Ser-207, 230–232 (SLH), and Asn-306 contribute to the S-adenosyl-L-methionine site. Cys-349 serves as the catalytic S-methylcysteine intermediate.

It belongs to the radical SAM superfamily. RlmN family. The cofactor is [4Fe-4S] cluster.

The protein resides in the cytoplasm. It catalyses the reaction adenosine(2503) in 23S rRNA + 2 reduced [2Fe-2S]-[ferredoxin] + 2 S-adenosyl-L-methionine = 2-methyladenosine(2503) in 23S rRNA + 5'-deoxyadenosine + L-methionine + 2 oxidized [2Fe-2S]-[ferredoxin] + S-adenosyl-L-homocysteine. It carries out the reaction adenosine(37) in tRNA + 2 reduced [2Fe-2S]-[ferredoxin] + 2 S-adenosyl-L-methionine = 2-methyladenosine(37) in tRNA + 5'-deoxyadenosine + L-methionine + 2 oxidized [2Fe-2S]-[ferredoxin] + S-adenosyl-L-homocysteine. In terms of biological role, specifically methylates position 2 of adenine 2503 in 23S rRNA and position 2 of adenine 37 in tRNAs. This is Probable dual-specificity RNA methyltransferase RlmN from Bacillus cereus (strain G9842).